The following is a 316-amino-acid chain: Ribosomal RNA small subunit methyltransferase H (316 aa).

S-adenosyl-L-methionine-binding positions include 35 to 37, D55, F79, D101, and Q108; that span reads GGH.

The protein belongs to the methyltransferase superfamily. RsmH family.

It localises to the cytoplasm. It catalyses the reaction cytidine(1402) in 16S rRNA + S-adenosyl-L-methionine = N(4)-methylcytidine(1402) in 16S rRNA + S-adenosyl-L-homocysteine + H(+). Functionally, specifically methylates the N4 position of cytidine in position 1402 (C1402) of 16S rRNA. This chain is Ribosomal RNA small subunit methyltransferase H, found in Vibrio parahaemolyticus serotype O3:K6 (strain RIMD 2210633).